The chain runs to 387 residues: Dual specificity mitogen-activated protein kinase kinase mek-2 (387 aa).

A disordered region spans residues 1–37; it reads MSSGKRRNPLGLSLPPTVNEQSESGEATAEEATATVP. The span at 16–25 shows a compositional bias: polar residues; sequence PTVNEQSESG. Residues 26–35 are compositionally biased toward low complexity; the sequence is EATAEEATAT. Residues 73-360 form the Protein kinase domain; it reads LQTEGELGHG…LKSLTADVFF (288 aa). ATP contacts are provided by residues 79-87 and K102; that span reads LGHGNGGVV. The active-site Proton acceptor is D195. 2 positions are modified to phosphoserine: S223 and S227.

The protein belongs to the protein kinase superfamily. STE Ser/Thr protein kinase family. MAP kinase kinase subfamily. In terms of assembly, interacts with ksr-1.

The catalysed reaction is L-seryl-[protein] + ATP = O-phospho-L-seryl-[protein] + ADP + H(+). The enzyme catalyses L-threonyl-[protein] + ATP = O-phospho-L-threonyl-[protein] + ADP + H(+). It carries out the reaction L-tyrosyl-[protein] + ATP = O-phospho-L-tyrosyl-[protein] + ADP + H(+). With respect to regulation, activated by tyrosine and threonine phosphorylation catalyzed by MAP kinase kinase kinases. Its function is as follows. Functions in the let-60 Ras signaling pathway; acts downstream of lin-45 raf kinase, but before the sur-1/mpk-1 gene product in controlling vulval cell differentiation. Required for progression of developing oocytes through the pachytene stage. Plays a role in responses to M.nematophilum-mediated bacterial infection by promoting tail swelling and preventing constipation. Involved in fluid homeostasis. Positively regulates lifespan upstream of mpk-1. This chain is Dual specificity mitogen-activated protein kinase kinase mek-2 (mek-2), found in Caenorhabditis elegans.